The following is a 650-amino-acid chain: 1-deoxy-D-xylulose-5-phosphate synthase 2 (650 aa).

Residues histidine 79 and alanine 120–serine 122 contribute to the thiamine diphosphate site. Aspartate 151 is a Mg(2+) binding site. Thiamine diphosphate contacts are provided by residues glycine 152 to serine 153, asparagine 180, tyrosine 289, and glutamate 371. Position 180 (asparagine 180) interacts with Mg(2+).

This sequence belongs to the transketolase family. DXPS subfamily. As to quaternary structure, homodimer. Requires Mg(2+) as cofactor. The cofactor is thiamine diphosphate.

It catalyses the reaction D-glyceraldehyde 3-phosphate + pyruvate + H(+) = 1-deoxy-D-xylulose 5-phosphate + CO2. The protein operates within metabolic intermediate biosynthesis; 1-deoxy-D-xylulose 5-phosphate biosynthesis; 1-deoxy-D-xylulose 5-phosphate from D-glyceraldehyde 3-phosphate and pyruvate: step 1/1. Functionally, catalyzes the acyloin condensation reaction between C atoms 2 and 3 of pyruvate and glyceraldehyde 3-phosphate to yield 1-deoxy-D-xylulose-5-phosphate (DXP). This Zymomonas mobilis subsp. mobilis (strain ATCC 31821 / ZM4 / CP4) protein is 1-deoxy-D-xylulose-5-phosphate synthase 2.